Here is a 305-residue protein sequence, read N- to C-terminus: NADH-cytochrome b5 reductase 1 (305 aa).

The chain crosses the membrane as a helical span at residues 8 to 28; that stretch reads VLLASLGVGLFTLFGLALGTY. Residues 44-156 enclose the FAD-binding FR-type domain; sequence DEKYLLRLLD…RGPSGLLSYA (113 aa). FAD-binding positions include 136 to 166 and 175 to 210; these read DSLK…IQPN and VAKK…QCFL.

This sequence belongs to the flavoprotein pyridine nucleotide cytochrome reductase family. FAD serves as cofactor.

The protein resides in the membrane. It catalyses the reaction 2 Fe(III)-[cytochrome b5] + NADH = 2 Fe(II)-[cytochrome b5] + NAD(+) + H(+). Its function is as follows. NADH-cytochrome b5 reductases are involved in desaturation and elongation of fatty acids, cholesterol biosynthesis, drug metabolism, and, in erythrocyte, methemoglobin reduction. This Rattus norvegicus (Rat) protein is NADH-cytochrome b5 reductase 1 (Cyb5r1).